We begin with the raw amino-acid sequence, 271 residues long: N-acetyltransferase ECO1 (271 aa).

The segment at 26-50 (VKCPKCSITYSTNSPSDLVQHKRYH) adopts a CCHH-type zinc-finger fold. The N-acetyltransferase domain occupies 109–271 (VMISPKKANE…SGKLLIPCYI (163 aa)).

Belongs to the acetyltransferase family. ECO subfamily.

Its subcellular location is the nucleus. In terms of biological role, probable acetyltransferase required for the establishment of sister chromatid cohesion and couple the processes of cohesion and DNA replication to ensure that only sister chromatids become paired together. In contrast to the structural cohesins, the deposition and establishment factors are required only during S phase. Acts by acetylating the cohesin complex component SMC3. This is N-acetyltransferase ECO1 (ECO1) from Kluyveromyces lactis (strain ATCC 8585 / CBS 2359 / DSM 70799 / NBRC 1267 / NRRL Y-1140 / WM37) (Yeast).